Here is a 325-residue protein sequence, read N- to C-terminus: Probable siderophore-binding lipoprotein YfiY (325 aa).

Residues 1-20 (MKKHISMLFVFLMAVMVLSA) form the signal peptide. Cysteine 21 carries N-palmitoyl cysteine lipidation. Cysteine 21 carries the S-diacylglycerol cysteine lipid modification. In terms of domain architecture, Fe/B12 periplasmic-binding spans 56-325 (RIVVLTNEGT…DIETYFLKTK (270 aa)). Serine 290 bears the Phosphoserine mark. Threonine 302 carries the phosphothreonine modification.

This sequence belongs to the bacterial solute-binding protein 8 family. In terms of assembly, the complex is composed of one ATP-binding protein (YusV), two transmembrane proteins (YfiZ and YfhA) and a solute-binding protein (YfiY). Interacts with FloT.

Its subcellular location is the cell membrane. It is found in the cytoplasm. The protein resides in the membrane raft. Part of the ABC transporter complex YfiYZ/YfhA/YusV involved in import of the iron-hydroxamate siderophores schizokinen, arthrobactin and corprogen. Binds the siderophores and delivers them to the surface of YfiZ/YfhA. The chain is Probable siderophore-binding lipoprotein YfiY (yfiY) from Bacillus subtilis (strain 168).